The sequence spans 600 residues: Long-chain-fatty-acid--CoA ligase FadD15 (600 aa).

Belongs to the ATP-dependent AMP-binding enzyme family.

The catalysed reaction is a long-chain fatty acid + ATP + CoA = a long-chain fatty acyl-CoA + AMP + diphosphate. Its pathway is lipid metabolism; fatty acid biosynthesis. Its function is as follows. Catalyzes the activation of long-chain fatty acids as acyl-coenzyme A (acyl-CoA), which are then transferred to the multifunctional polyketide synthase (PKS) type III for further chain extension. In Mycobacterium bovis (strain ATCC BAA-935 / AF2122/97), this protein is Long-chain-fatty-acid--CoA ligase FadD15 (fadD15).